The following is a 236-amino-acid chain: Movement and silencing protein TGBp1 (236 aa).

Residues 1–117 form the (+)RNA virus helicase ATP-binding domain; it reads MDHIHHLLSS…DNLFEPHYTL (117 aa). Residues 118–236 enclose the (+)RNA virus helicase C-terminal domain; sequence EITYRFGPNT…LGPDAFDSSP (119 aa).

Belongs to the Tymovirales TGBp1 protein family. Homodimer and homooligomer. Interacts with capsid protein. Interacts with host AGO1; this interaction targets the host protein for degradation, thereby suppressing the antiviral RNA silencing.

It is found in the host cytoplasm. Transports viral genome to neighboring plant cells directly through plasmosdesmata, without any budding. The movement protein allows efficient cell to cell propagation, by bypassing the host cell wall barrier. Increases plasmodesma size exclusion limit. Acts as a suppressor of RNA-mediated gene silencing, also known as post-transcriptional gene silencing (PTGS), a mechanism of plant viral defense that limits the accumulation of viral RNAs. The protein is Movement and silencing protein TGBp1 of White clover mosaic virus (strain O) (WCMV).